The primary structure comprises 214 residues: 3-isopropylmalate dehydratase small subunit (214 aa).

The protein belongs to the LeuD family. LeuD type 1 subfamily. As to quaternary structure, heterodimer of LeuC and LeuD.

The enzyme catalyses (2R,3S)-3-isopropylmalate = (2S)-2-isopropylmalate. The protein operates within amino-acid biosynthesis; L-leucine biosynthesis; L-leucine from 3-methyl-2-oxobutanoate: step 2/4. Catalyzes the isomerization between 2-isopropylmalate and 3-isopropylmalate, via the formation of 2-isopropylmaleate. This chain is 3-isopropylmalate dehydratase small subunit, found in Pseudomonas entomophila (strain L48).